The chain runs to 445 residues: FAS-associated factor 2 (445 aa).

A2 bears the N-acetylalanine mark. The region spanning 12–48 is the UBA domain; it reads EQTEKLLQFQDLTGIESMDQCRHTLEQHNWNIEAAVQ. The residue at position 167 (K167) is an N6-acetyllysine. The stretch at 275–350 forms a coiled coil; sequence SERLEREERN…EEKERKLECL (76 aa). Positions 299–361 are disordered; that stretch reads ASLRADQEKE…PEPSPDDPES (63 aa). A compositionally biased stretch (basic and acidic residues) spans 303–348; it reads ADQEKERKKREERERKRRKEEEVQQQKLAEERRRRNLQEEKERKLE. In terms of domain architecture, UBX spans 357-439; it reads DDPESVKIIF…GLSHTEVLFV (83 aa).

Identified in a complex that contains SEL1L, OS9, FAF2/UBXD8, UBE2J1/UBC6E and AUP1. Interacts with YOD1. Interacts (via N-terminus) with UBQLN2 (via C-terminus). Interacts with PNPLA2 and UBAC2. Interacts with ZFAND2B; probably through VCP. Interacts with LMBR1L.

It localises to the cytoplasm. The protein localises to the lipid droplet. Its subcellular location is the endoplasmic reticulum. In terms of biological role, plays an important role in endoplasmic reticulum-associated degradation (ERAD) that mediates ubiquitin-dependent degradation of misfolded endoplasmic reticulum proteins. By controlling the steady-state expression of the IGF1R receptor, indirectly regulates the insulin-like growth factor receptor signaling pathway. Involved in inhibition of lipid droplet degradation by binding to phospholipase PNPL2 and inhibiting its activity by promoting dissociation of PNPL2 from its endogenous activator, ABHD5 which inhibits the rate of triacylglycerol hydrolysis. Involved in stress granule disassembly: associates with ubiquitinated G3BP1 in response to heat shock, thereby promoting interaction between ubiquitinated G3BP1 and VCP, followed by G3BP1 extraction from stress granules and stress granule disassembly. This chain is FAS-associated factor 2 (FAF2), found in Bos taurus (Bovine).